Reading from the N-terminus, the 435-residue chain is Nuclear hormone receptor family member nhr-14 (435 aa).

The segment at residues 17–92 is a DNA-binding region (nuclear receptor); sequence ADFCVVCGDK…DGMKPEAIQN (76 aa). 2 NR C4-type zinc fingers span residues 20–40 and 56–80; these read CVVCGDKAIGKHYGAVACNGC and CRFNKQCNIDKDHRNACRYCRFQKC. The disordered stretch occupies residues 91–126; that stretch reads QNERDRIGSTKRRKRSGANSENNSDSEGTPSPKIEV. Positions 107–119 are enriched in polar residues; the sequence is GANSENNSDSEGT. The NR LBD domain maps to 131–355; it reads VSRKLIEMLL…KRDTISPKIE (225 aa).

This sequence belongs to the nuclear hormone receptor family. As to expression, expressed in intestine and head neurons in young adults.

It is found in the nucleus. Orphan nuclear receptor. Transcriptional repressor of intestinal metal transporter smf-3 and genes of the innate immune response. Inhibits nuclear localization of transcription factor pqm-1; in response to pathogen stress, may facilitate translocation of pqm-1, leading to transcriptional activation of genes involved in innate immunity and iron uptake. The chain is Nuclear hormone receptor family member nhr-14 (nhr-14) from Caenorhabditis elegans.